The chain runs to 235 residues: AA9 family lytic polysaccharide monooxygenase D (235 aa).

The signal sequence occupies residues 1-18; sequence MKAFFAVLAVVSAPFVLG. His-19 contributes to the Cu(2+) binding site. Residue Ser-29 is glycosylated (O-linked (Man...) serine). Cys-61 and Cys-181 are disulfide-bonded. His-94 lines the Cu(2+) pocket. His-167 and Gln-176 together coordinate O2. Tyr-178 contacts Cu(2+). A glycan (N-linked (GlcNAc...) asparagine) is linked at Asn-221.

It belongs to the polysaccharide monooxygenase AA9 family. It depends on Cu(2+) as a cofactor.

The protein localises to the secreted. The catalysed reaction is [(1-&gt;4)-beta-D-glucosyl]n+m + reduced acceptor + O2 = 4-dehydro-beta-D-glucosyl-[(1-&gt;4)-beta-D-glucosyl]n-1 + [(1-&gt;4)-beta-D-glucosyl]m + acceptor + H2O.. Functionally, lytic polysaccharide monooxygenase (LPMO) that depolymerizes crystalline and amorphous polysaccharides via the oxidation of scissile alpha- or beta-(1-4)-glycosidic bonds, yielding only C1 oxidation products. Catalysis by LPMOs requires the reduction of the active-site copper from Cu(II) to Cu(I) by a reducing agent and H(2)O(2) or O(2) as a cosubstrate. In Phanerodontia chrysosporium (White-rot fungus), this protein is AA9 family lytic polysaccharide monooxygenase D.